Here is a 116-residue protein sequence, read N- to C-terminus: Ribosome-binding factor A (116 aa).

This sequence belongs to the RbfA family. Monomer. Binds 30S ribosomal subunits, but not 50S ribosomal subunits or 70S ribosomes.

It localises to the cytoplasm. In terms of biological role, one of several proteins that assist in the late maturation steps of the functional core of the 30S ribosomal subunit. Associates with free 30S ribosomal subunits (but not with 30S subunits that are part of 70S ribosomes or polysomes). Required for efficient processing of 16S rRNA. May interact with the 5'-terminal helix region of 16S rRNA. This is Ribosome-binding factor A from Streptococcus uberis (strain ATCC BAA-854 / 0140J).